Here is a 561-residue protein sequence, read N- to C-terminus: Proline--tRNA ligase (561 aa).

Belongs to the class-II aminoacyl-tRNA synthetase family. ProS type 1 subfamily. As to quaternary structure, homodimer.

Its subcellular location is the cytoplasm. The enzyme catalyses tRNA(Pro) + L-proline + ATP = L-prolyl-tRNA(Pro) + AMP + diphosphate. Functionally, catalyzes the attachment of proline to tRNA(Pro) in a two-step reaction: proline is first activated by ATP to form Pro-AMP and then transferred to the acceptor end of tRNA(Pro). As ProRS can inadvertently accommodate and process non-cognate amino acids such as alanine and cysteine, to avoid such errors it has two additional distinct editing activities against alanine. One activity is designated as 'pretransfer' editing and involves the tRNA(Pro)-independent hydrolysis of activated Ala-AMP. The other activity is designated 'posttransfer' editing and involves deacylation of mischarged Ala-tRNA(Pro). The misacylated Cys-tRNA(Pro) is not edited by ProRS. The protein is Proline--tRNA ligase of Thermosipho africanus (strain TCF52B).